The primary structure comprises 308 residues: Uricase-2 isozyme 1 (308 aa).

Catalysis depends on charge relay system residues Lys17 and Thr63. Residues Thr63, Asp64, Phe165, Arg182, Val237, Gln238, and Asn264 each contribute to the urate site. The Charge relay system role is filled by His266. Positions Ser306–Leu308 match the Microbody targeting signal motif.

This sequence belongs to the uricase family.

It is found in the peroxisome. It carries out the reaction urate + O2 + H2O = 5-hydroxyisourate + H2O2. It functions in the pathway purine metabolism; urate degradation; (S)-allantoin from urate: step 1/3. Its function is as follows. Catalyzes the oxidation of uric acid to 5-hydroxyisourate, which is further processed to form (S)-allantoin. In Canavalia lineata (Beach bean), this protein is Uricase-2 isozyme 1.